A 304-amino-acid chain; its full sequence is Kazal-type serine protease inhibitor domain-containing protein 1 (304 aa).

Positions 1-30 (MLPPPRPAAALALPVLLLLLVVLTPPPTGA) are cleaved as a signal peptide. An IGFBP N-terminal domain is found at 49 to 129 (EGEGCAPCRP…EVPEPLCACR (81 aa)). 7 disulfides stabilise this stretch: Cys-53/Cys-76, Cys-56/Cys-78, Cys-61/Cys-79, Cys-67/Cys-82, Cys-90/Cys-108, Cys-102/Cys-126, and Cys-135/Cys-168. A Kazal-like domain is found at 120–170 (EVPEPLCACRSQSPLCGSDGHTYSQICRLQEAARARPDANLTVAHPGPCES). N-linked (GlcNAc...) asparagine glycans are attached at residues Asn-159 and Asn-183. In terms of domain architecture, Ig-like C2-type spans 172 to 269 (PQIVSHPYDT…GQVEAPASLT (98 aa)). Cys-193 and Cys-253 form a disulfide bridge. Asn-277 is a glycosylation site (N-linked (GlcNAc...) asparagine).

The protein localises to the secreted. The protein resides in the extracellular space. It localises to the extracellular matrix. Its function is as follows. Involved in the proliferation of osteoblasts during bone formation and bone regeneration. Promotes matrix assembly. This chain is Kazal-type serine protease inhibitor domain-containing protein 1 (KAZALD1), found in Homo sapiens (Human).